A 46-amino-acid chain; its full sequence is Alpha-1-antiproteinase (46 aa).

Position 30 is a phosphoserine (Ser-30).

Belongs to the serpin family. In terms of processing, N-glycosylated; contains bi- and triantennary glycans with a bisecting N-acetylglucosamine and fucose residue. In terms of tissue distribution, plasma.

The protein resides in the secreted. The protein is Alpha-1-antiproteinase of Notamacropus eugenii (Tammar wallaby).